A 455-amino-acid polypeptide reads, in one-letter code: Bifunctional protein GlmU (455 aa).

Residues 1–226 (MGLSVVILAA…EFEILGVNDR (226 aa)) are pyrophosphorylase. Residues 8–11 (LAAG), Lys-22, Gln-73, 78–79 (GT), 99–101 (YGD), Gly-136, Glu-151, Asn-166, and Asn-224 each bind UDP-N-acetyl-alpha-D-glucosamine. Asp-101 serves as a coordination point for Mg(2+). Mg(2+) is bound at residue Asn-224. Residues 227-247 (TQLASLERVWQRNVAEKIMAK) are linker. An N-acetyltransferase region spans residues 248–455 (GVSIADPNRF…WQRSVKKTDK (208 aa)). UDP-N-acetyl-alpha-D-glucosamine contacts are provided by Arg-330 and Lys-348. His-360 acts as the Proton acceptor in catalysis. The UDP-N-acetyl-alpha-D-glucosamine site is built by Tyr-363 and Asn-374. Acetyl-CoA-binding positions include Ala-377, 383–384 (NY), Ser-402, Ala-420, and Arg-437.

This sequence in the N-terminal section; belongs to the N-acetylglucosamine-1-phosphate uridyltransferase family. In the C-terminal section; belongs to the transferase hexapeptide repeat family. As to quaternary structure, homotrimer. Mg(2+) serves as cofactor.

It is found in the cytoplasm. It carries out the reaction alpha-D-glucosamine 1-phosphate + acetyl-CoA = N-acetyl-alpha-D-glucosamine 1-phosphate + CoA + H(+). The enzyme catalyses N-acetyl-alpha-D-glucosamine 1-phosphate + UTP + H(+) = UDP-N-acetyl-alpha-D-glucosamine + diphosphate. The protein operates within nucleotide-sugar biosynthesis; UDP-N-acetyl-alpha-D-glucosamine biosynthesis; N-acetyl-alpha-D-glucosamine 1-phosphate from alpha-D-glucosamine 6-phosphate (route II): step 2/2. It participates in nucleotide-sugar biosynthesis; UDP-N-acetyl-alpha-D-glucosamine biosynthesis; UDP-N-acetyl-alpha-D-glucosamine from N-acetyl-alpha-D-glucosamine 1-phosphate: step 1/1. Its pathway is bacterial outer membrane biogenesis; LPS lipid A biosynthesis. Functionally, catalyzes the last two sequential reactions in the de novo biosynthetic pathway for UDP-N-acetylglucosamine (UDP-GlcNAc). The C-terminal domain catalyzes the transfer of acetyl group from acetyl coenzyme A to glucosamine-1-phosphate (GlcN-1-P) to produce N-acetylglucosamine-1-phosphate (GlcNAc-1-P), which is converted into UDP-GlcNAc by the transfer of uridine 5-monophosphate (from uridine 5-triphosphate), a reaction catalyzed by the N-terminal domain. This Francisella tularensis subsp. holarctica (strain OSU18) protein is Bifunctional protein GlmU.